The primary structure comprises 75 residues: MKLTLFILIVFVVLANVYAAGISERNIIGGRVIKLCGGGAQKCCDREPRCDPCRKCVQSFHSGVYMCSDKKSNCS.

An N-terminal signal peptide occupies residues 1 to 19 (MKLTLFILIVFVVLANVYA). The propeptide occupies 20–31 (AGISERNIIGGR).

Post-translationally, contains 4 disulfide bonds. Expressed by the venom gland.

The protein resides in the secreted. No toxicity is observed upon intracranial injection into mice and intrathorax injection into crickets. The polypeptide is U14-hexatoxin-Mg1a (Macrothele gigas (Japanese funnel web spider)).